Here is a 149-residue protein sequence, read N- to C-terminus: Ribosome-binding factor A (149 aa).

The interval 125–149 (FGSADEVLNEDEGATDDTDDTKGKD) is disordered. Residues 131–143 (VLNEDEGATDDTD) are compositionally biased toward acidic residues.

The protein belongs to the RbfA family. In terms of assembly, monomer. Binds 30S ribosomal subunits, but not 50S ribosomal subunits or 70S ribosomes.

The protein localises to the cytoplasm. Its function is as follows. One of several proteins that assist in the late maturation steps of the functional core of the 30S ribosomal subunit. Associates with free 30S ribosomal subunits (but not with 30S subunits that are part of 70S ribosomes or polysomes). Required for efficient processing of 16S rRNA. May interact with the 5'-terminal helix region of 16S rRNA. In Shewanella sp. (strain W3-18-1), this protein is Ribosome-binding factor A.